The chain runs to 188 residues: Probable nicotinate-nucleotide adenylyltransferase (188 aa).

Belongs to the NadD family.

The enzyme catalyses nicotinate beta-D-ribonucleotide + ATP + H(+) = deamido-NAD(+) + diphosphate. The protein operates within cofactor biosynthesis; NAD(+) biosynthesis; deamido-NAD(+) from nicotinate D-ribonucleotide: step 1/1. Functionally, catalyzes the reversible adenylation of nicotinate mononucleotide (NaMN) to nicotinic acid adenine dinucleotide (NaAD). The polypeptide is Probable nicotinate-nucleotide adenylyltransferase (Listeria innocua serovar 6a (strain ATCC BAA-680 / CLIP 11262)).